A 206-amino-acid chain; its full sequence is Dephospho-CoA kinase (206 aa).

The 197-residue stretch at Thr-4–Phe-200 folds into the DPCK domain. Gly-12 to Thr-17 serves as a coordination point for ATP.

The protein belongs to the CoaE family.

It is found in the cytoplasm. The enzyme catalyses 3'-dephospho-CoA + ATP = ADP + CoA + H(+). The protein operates within cofactor biosynthesis; coenzyme A biosynthesis; CoA from (R)-pantothenate: step 5/5. Functionally, catalyzes the phosphorylation of the 3'-hydroxyl group of dephosphocoenzyme A to form coenzyme A. This is Dephospho-CoA kinase from Salmonella typhimurium (strain LT2 / SGSC1412 / ATCC 700720).